Consider the following 49-residue polypeptide: Large ribosomal subunit protein bL33B (49 aa).

The protein belongs to the bacterial ribosomal protein bL33 family.

This Lactococcus lactis subsp. lactis (strain IL1403) (Streptococcus lactis) protein is Large ribosomal subunit protein bL33B (rpmG2).